Here is a 286-residue protein sequence, read N- to C-terminus: GTP cyclohydrolase 1 type 2 homolog (286 aa).

5 residues coordinate a divalent metal cation: histidine 66, histidine 67, aspartate 103, histidine 254, and glutamate 258.

Belongs to the GTP cyclohydrolase I type 2/NIF3 family. In terms of assembly, homohexamer.

This is GTP cyclohydrolase 1 type 2 homolog from Treponema pallidum (strain Nichols).